We begin with the raw amino-acid sequence, 890 residues long: Translation initiation factor IF-2 (890 aa).

Residues 45 to 304 are disordered; that stretch reads LIDHLNQKNS…LQQGFQKPAQ (260 aa). Polar residues predominate over residues 67-81; the sequence is STLNIPGTGGKSKSV. The segment covering 92–217 has biased composition (basic and acidic residues); sequence VKRDPQEAER…RMAEENKWTD (126 aa). Positions 252–266 are enriched in basic residues; that stretch reads GRGRNAKAARPKKGN. Basic and acidic residues predominate over residues 267–280; the sequence is KHAESKADREEARA. In terms of domain architecture, tr-type G spans 389–558; it reads PRAPVVTIMG…LLQAEVLELK (170 aa). The G1 stretch occupies residues 398–405; the sequence is GHVDHGKT. 398–405 lines the GTP pocket; the sequence is GHVDHGKT. Residues 423–427 form a G2 region; the sequence is GITQH. The G3 stretch occupies residues 444 to 447; sequence DTPG. GTP is bound by residues 444–448 and 498–501; these read DTPGH and NKID. The interval 498 to 501 is G4; sequence NKID. Positions 534 to 536 are G5; that stretch reads SAK. The residue at position 808 (lysine 808) is an N6-acetyllysine.

It belongs to the TRAFAC class translation factor GTPase superfamily. Classic translation factor GTPase family. IF-2 subfamily.

The protein localises to the cytoplasm. Functionally, one of the essential components for the initiation of protein synthesis. Protects formylmethionyl-tRNA from spontaneous hydrolysis and promotes its binding to the 30S ribosomal subunits. Also involved in the hydrolysis of GTP during the formation of the 70S ribosomal complex. This chain is Translation initiation factor IF-2, found in Escherichia coli O127:H6 (strain E2348/69 / EPEC).